An 891-amino-acid chain; its full sequence is MQMTTFLNINQIRTTFIEFFKKYGHHYASSSSLVPGNDPSLFFVNAGIVQFKDYVRAPETSKYSRVVTCQKCVRAGGKHNDLESVGYTARHHTFFEMLGNFSFGEDNAKADFMQLIWSFLTKELFIDEDRLIVTVYHTDHETAKLWRSIAGLDDSRIIRIKTDDNFWSMGPVGPCGPCTEIFYDHGDKIPGGLPGTKDENGGRYVEIWNIVFMQYEQLNESTRVELAKRCIDTGAGLERIATVLQGVYDNYDIDLFKNLIANIEHLTKIKSVGEANFSHRIIADHLRASAFLIADGVMPSNDGRGYVLRRIMRRAMNQIHQLGCKEPVMHQLVPGLINEMGDFYKELRIRQELITYLLRNEEEKFKTTLSKGLKLLEEESKNLTSGSQLSGHIAFKLYDTYGFPFDLTQDILKKRSISINKTEFDQNMLEQQNRARQLWKGQGSNKEQLLLEKLKEEFRATEFVGYSLYQAEGIVISLIQDNQYVEYIDINQVDDNNKEFWLITNQTPFYGQSGGQMGDIGIIKNNECTIHVTDTIKLFGCTHVHICKIVSGKININAVVHMAIDKQYRTQLQIHHSATHILHAALREILGNHIIQKGSLVAYDYLRFDVSHPTSISREILTKIENRVNEIILNNTAVKLMIMPFDQAIAHGAVALFEEKYGDEVRAISIGETSDARYYSFELCGGTHVKYTGDIGAFRILSESAIAAGVRRVEAIAGKHVIKQARRNSELLDLIAEKFSVTKQTIMSKIDGIIEENNLLKKQLHQLKYNQLILCEKDIQNIADDIGTIKLVYKNIEDYDLQIVRKAVSNTTKNIKNLVMVVISNNDKKNTIIIGVSDNITNKIQANNLVKEIINYLGGSGGGSATLAQIGCQYTCKLLDLKNIICKLLAT.

Zn(2+) contacts are provided by histidine 576, histidine 580, cysteine 684, and histidine 688.

The protein belongs to the class-II aminoacyl-tRNA synthetase family. Zn(2+) serves as cofactor.

Its subcellular location is the cytoplasm. It carries out the reaction tRNA(Ala) + L-alanine + ATP = L-alanyl-tRNA(Ala) + AMP + diphosphate. Its function is as follows. Catalyzes the attachment of alanine to tRNA(Ala) in a two-step reaction: alanine is first activated by ATP to form Ala-AMP and then transferred to the acceptor end of tRNA(Ala). Also edits incorrectly charged Ser-tRNA(Ala) and Gly-tRNA(Ala) via its editing domain. This Orientia tsutsugamushi (strain Boryong) (Rickettsia tsutsugamushi) protein is Alanine--tRNA ligase.